The chain runs to 249 residues: Small ribosomal subunit protein uS4m (249 aa).

Positions 133–193 (RRLDIIIYRA…PEIVNLLRNQ (61 aa)) constitute an S4 RNA-binding domain.

The protein belongs to the universal ribosomal protein uS4 family.

It is found in the mitochondrion. In Reclinomonas americana, this protein is Small ribosomal subunit protein uS4m (RPS4).